The primary structure comprises 332 residues: MASTIAVLGAGAWGTALASVLGRNGHAVRLWTREAEHAAAINAERVNQRHLPDCPLPDSLTATADLETALGGTDWLLIAVPSSAFRGLIERLAPYRPGKVVWATKGLESESGGFLHDVVQAGLDPAPAMAVISGPSFAAEVGQGLPTAITVAADDADLAAEVVRAFHNDRFRPYSSTDMTGVELGGAVKNVLAVATGASDGLGLGANARAALVTRGLAEISRLGAALGADPQTLIGLAGMGDLLLTCTDDQSRNRRFGFALGQGATVETALASVGSTVEGARTAAELHSLAERHSVEMPICNMVYRVVSGDTPLEQAVRELMERTPKAEFDD.

NADPH is bound by residues Trp13, Arg33, and Lys105. Sn-glycerol 3-phosphate contacts are provided by Lys105, Gly134, and Ser136. Ala138 contributes to the NADPH binding site. Positions 189, 242, 252, 253, and 254 each coordinate sn-glycerol 3-phosphate. The Proton acceptor role is filled by Lys189. Position 253 (Arg253) interacts with NADPH. Position 279 (Glu279) interacts with NADPH.

This sequence belongs to the NAD-dependent glycerol-3-phosphate dehydrogenase family.

The protein resides in the cytoplasm. It catalyses the reaction sn-glycerol 3-phosphate + NAD(+) = dihydroxyacetone phosphate + NADH + H(+). The enzyme catalyses sn-glycerol 3-phosphate + NADP(+) = dihydroxyacetone phosphate + NADPH + H(+). It participates in membrane lipid metabolism; glycerophospholipid metabolism. Its function is as follows. Catalyzes the reduction of the glycolytic intermediate dihydroxyacetone phosphate (DHAP) to sn-glycerol 3-phosphate (G3P), the key precursor for phospholipid synthesis. This chain is Glycerol-3-phosphate dehydrogenase [NAD(P)+], found in Halorhodospira halophila (strain DSM 244 / SL1) (Ectothiorhodospira halophila (strain DSM 244 / SL1)).